Consider the following 210-residue polypeptide: Cytochrome c oxidase subunit 2 (210 aa).

Over 1-20 the chain is Mitochondrial intermembrane; the sequence is MAFILSFWMIFLLDSVIVLL. The helical transmembrane segment at 21-42 threads the bilayer; sequence SFVCFVCVWICALLFSTVLLVS. Residues 43–60 lie on the Mitochondrial matrix side of the membrane; that stretch reads KLNNIYCTWDFTASKFID. The chain crosses the membrane as a helical span at residues 61 to 86; the sequence is VYWFTIGGMFSLGLLLRLCLLLYFGH. The Mitochondrial intermembrane segment spans residues 87 to 210; the sequence is LNFVSFDLCK…GFMPIVICFI (124 aa). The Cu cation site is built by His157, Cys192, Glu194, Cys196, His200, and Met203. Glu194 contacts Mg(2+).

The protein belongs to the cytochrome c oxidase subunit 2 family. In terms of assembly, component of the cytochrome c oxidase (complex IV, CIV), a multisubunit enzyme composed of a catalytic core of 3 subunits and several supernumerary subunits. The complex exists as a monomer or a dimer and forms supercomplexes (SCs) in the inner mitochondrial membrane with ubiquinol-cytochrome c oxidoreductase (cytochrome b-c1 complex, complex III, CIII). It depends on Cu cation as a cofactor.

Its subcellular location is the mitochondrion inner membrane. It catalyses the reaction 4 Fe(II)-[cytochrome c] + O2 + 8 H(+)(in) = 4 Fe(III)-[cytochrome c] + 2 H2O + 4 H(+)(out). In terms of biological role, component of the cytochrome c oxidase, the last enzyme in the mitochondrial electron transport chain which drives oxidative phosphorylation. The respiratory chain contains 3 multisubunit complexes succinate dehydrogenase (complex II, CII), ubiquinol-cytochrome c oxidoreductase (cytochrome b-c1 complex, complex III, CIII) and cytochrome c oxidase (complex IV, CIV), that cooperate to transfer electrons derived from NADH and succinate to molecular oxygen, creating an electrochemical gradient over the inner membrane that drives transmembrane transport and the ATP synthase. Cytochrome c oxidase is the component of the respiratory chain that catalyzes the reduction of oxygen to water. Electrons originating from reduced cytochrome c in the intermembrane space (IMS) are transferred via the dinuclear copper A center (CU(A)) of subunit 2 and heme A of subunit 1 to the active site in subunit 1, a binuclear center (BNC) formed by heme A3 and copper B (CU(B)). The BNC reduces molecular oxygen to 2 water molecules using 4 electrons from cytochrome c in the IMS and 4 protons from the mitochondrial matrix. This Leishmania tarentolae (Sauroleishmania tarentolae) protein is Cytochrome c oxidase subunit 2.